We begin with the raw amino-acid sequence, 285 residues long: Polyamine aminopropyltransferase (285 aa).

Residues 5-241 (DNWYIEHFQP…GWWSVTMASK (237 aa)) enclose the PABS domain. Gln35 serves as a coordination point for S-methyl-5'-thioadenosine. His66 and Asp90 together coordinate spermidine. Residues Asp110 and 141 to 142 (DG) each bind S-methyl-5'-thioadenosine. Asp160 functions as the Proton acceptor in the catalytic mechanism. 160 to 163 (DSTD) serves as a coordination point for spermidine. Pro167 serves as a coordination point for S-methyl-5'-thioadenosine.

This sequence belongs to the spermidine/spermine synthase family. In terms of assembly, homodimer or homotetramer.

It localises to the cytoplasm. The catalysed reaction is S-adenosyl 3-(methylsulfanyl)propylamine + putrescine = S-methyl-5'-thioadenosine + spermidine + H(+). It functions in the pathway amine and polyamine biosynthesis; spermidine biosynthesis; spermidine from putrescine: step 1/1. Functionally, catalyzes the irreversible transfer of a propylamine group from the amino donor S-adenosylmethioninamine (decarboxy-AdoMet) to putrescine (1,4-diaminobutane) to yield spermidine. This Xanthomonas oryzae pv. oryzae (strain MAFF 311018) protein is Polyamine aminopropyltransferase.